Consider the following 264-residue polypeptide: Thymidylate synthase (264 aa).

DUMP is bound at residue R21. H51 provides a ligand contact to (6R)-5,10-methylene-5,6,7,8-tetrahydrofolate. 126-127 (RR) contributes to the dUMP binding site. The active-site Nucleophile is the C146. DUMP is bound by residues 166 to 169 (RSAD), N177, and 207 to 209 (HIY). Position 169 (D169) interacts with (6R)-5,10-methylene-5,6,7,8-tetrahydrofolate. A263 provides a ligand contact to (6R)-5,10-methylene-5,6,7,8-tetrahydrofolate.

Belongs to the thymidylate synthase family. Bacterial-type ThyA subfamily. As to quaternary structure, homodimer.

It is found in the cytoplasm. It carries out the reaction dUMP + (6R)-5,10-methylene-5,6,7,8-tetrahydrofolate = 7,8-dihydrofolate + dTMP. Its pathway is pyrimidine metabolism; dTTP biosynthesis. Functionally, catalyzes the reductive methylation of 2'-deoxyuridine-5'-monophosphate (dUMP) to 2'-deoxythymidine-5'-monophosphate (dTMP) while utilizing 5,10-methylenetetrahydrofolate (mTHF) as the methyl donor and reductant in the reaction, yielding dihydrofolate (DHF) as a by-product. This enzymatic reaction provides an intracellular de novo source of dTMP, an essential precursor for DNA biosynthesis. This chain is Thymidylate synthase, found in Brucella abortus (strain 2308).